We begin with the raw amino-acid sequence, 512 residues long: Vacuolar protein sorting-associated protein 30 (512 aa).

The BARA stretch occupies residues 294 to 511; sequence TNIYNESFRI…LVFCSSKLSL (218 aa).

This sequence belongs to the beclin family. In terms of assembly, component of the autophagy-specific VPS34 PI3-kinase complex I composed of VPS15, VPS30, VPS34, ATG14 and ATG38; and of the VPS34 PI3-kinase complex II composed of VPS15, VPS30, VPS34 and VPS38.

It localises to the endosome membrane. It is found in the vacuole membrane. The protein resides in the preautophagosomal structure membrane. Its function is as follows. Required for cytoplasm to vacuole transport (Cvt), autophagy, nucleophagy, and mitophagy, as a part of the autophagy-specific VPS34 PI3-kinase complex I. This complex is essential to recruit the ATG8-phosphatidylinositol conjugate and the ATG12-ATG5 conjugate to the pre-autophagosomal structure. Also involved in endosome-to-Golgi retrograde transport as part of the VPS34 PI3-kinase complex II. This second complex is required for the endosome-to-Golgi retrieval of PEP1 and KEX2, and the recruitment of VPS5 and VPS7, two components of the retromer complex, to endosomal membranes (probably through the synthesis of a specific pool of phosphatidylinositol 3-phosphate recruiting the retromer to the endosomes). Required for survival and/or proliferation in kidneys but not brain. This is Vacuolar protein sorting-associated protein 30 from Candida glabrata (strain ATCC 2001 / BCRC 20586 / JCM 3761 / NBRC 0622 / NRRL Y-65 / CBS 138) (Yeast).